A 915-amino-acid chain; its full sequence is Protein translocase subunit SecA (915 aa).

ATP-binding positions include Gln-87, 105–109, and Asp-516; that span reads GEGKT. Residues 854–915 are disordered; the sequence is QKMQMRHEQL…KYKNCHGQLE (62 aa). Zn(2+) is bound by residues Cys-899, Cys-901, Cys-910, and His-911.

Belongs to the SecA family. As to quaternary structure, monomer and homodimer. Part of the essential Sec protein translocation apparatus which comprises SecA, SecYEG and auxiliary proteins SecDF-YajC and YidC. Zn(2+) serves as cofactor.

The protein resides in the cell inner membrane. The protein localises to the cytoplasm. It carries out the reaction ATP + H2O + cellular proteinSide 1 = ADP + phosphate + cellular proteinSide 2.. Part of the Sec protein translocase complex. Interacts with the SecYEG preprotein conducting channel. Has a central role in coupling the hydrolysis of ATP to the transfer of proteins into and across the cell membrane, serving both as a receptor for the preprotein-SecB complex and as an ATP-driven molecular motor driving the stepwise translocation of polypeptide chains across the membrane. The polypeptide is Protein translocase subunit SecA (Cellvibrio japonicus (strain Ueda107) (Pseudomonas fluorescens subsp. cellulosa)).